The sequence spans 42 residues: Large ribosomal subunit protein bL36 (42 aa).

This sequence belongs to the bacterial ribosomal protein bL36 family.

The chain is Large ribosomal subunit protein bL36 from Anaplasma marginale (strain St. Maries).